Here is a 306-residue protein sequence, read N- to C-terminus: MPLNGDLDRQIEQLMECKPLGEADVKILCDQAKAILVEEYNVQPVKCPVTVCGDIHGQFYDLIELFRIGGNAPDTNYLFMGDYVDRGYYSVETVSLLVALKVRYRDRLTILRGNHESRQITQVYGFYDECLRKYGNANVWKYFTDLFDYLPLTALIESQVFCLHGGLSPSLDTLDNIRSLDRIQEVPHEGPMCDLLWSDPDDRCGWGISPRGAGYTFGQDIATQFNHNNGLSLISRAHQLVMEGYNWCQEKNVVTVFSAPNYCYRCGNMAAILEIGEKMEQNFLQFDPAPRQVEPDTTRKTPDYFL.

Mn(2+) is bound by residues Asp-54, His-56, Asp-82, and Asn-114. Catalysis depends on His-115, which acts as the Proton donor. Mn(2+) is bound by residues His-164 and His-238. Leu-306 is subject to Leucine methyl ester.

Belongs to the PPP phosphatase family. PP-2A subfamily. In terms of assembly, PP2A consists of a common heterodimeric core enzyme, composed of a 36 kDa catalytic subunit (subunit C) and a 65 kDa constant regulatory subunit (subunit A), that associates with a variety of regulatory subunits such as subunits B (the R2/B/PR55/B55, R3/B''/PR72/PR130/PR59 and R5/B'/B56 families). Interacts with TAF12B. Interacts with SRK2E/OST1. Interacts with TAP46. It depends on Mn(2+) as a cofactor. Post-translationally, reversibly methyl esterified on Leu-306 by leucine carboxyl methyltransferase 1 (LCMT1) and pectin methylesterase 1 (PME1). Carboxyl methylation influences the affinity of the catalytic subunit for the different regulatory subunits, thereby modulating the PP2A holoenzyme's substrate specificity, enzyme activity and cellular localization. In terms of processing, phosphorylation of either threonine (by autophosphorylation-activated protein kinase) or tyrosine results in inactivation of the phosphatase. Auto-dephosphorylation has been suggested as a mechanism for reactivation.

Its subcellular location is the cytoplasm. The catalysed reaction is O-phospho-L-seryl-[protein] + H2O = L-seryl-[protein] + phosphate. It carries out the reaction O-phospho-L-threonyl-[protein] + H2O = L-threonyl-[protein] + phosphate. The polypeptide is Serine/threonine-protein phosphatase PP2A-1 catalytic subunit (Arabidopsis thaliana (Mouse-ear cress)).